The primary structure comprises 329 residues: GTP 3',8-cyclase 1 (329 aa).

Residues 7 to 230 (GQGRQIDYLR…LDSAEQSGGP (224 aa)) enclose the Radical SAM core domain. Residue R16 coordinates GTP. Residues C23 and C27 each coordinate [4Fe-4S] cluster. Y29 contacts S-adenosyl-L-methionine. C30 contacts [4Fe-4S] cluster. R65 contacts GTP. G69 is an S-adenosyl-L-methionine binding site. A GTP-binding site is contributed by T96. S-adenosyl-L-methionine is bound at residue S120. GTP is bound at residue K157. S-adenosyl-L-methionine is bound at residue M191. The [4Fe-4S] cluster site is built by C255 and C258. Residue 260-262 (RLR) coordinates GTP. Position 272 (C272) interacts with [4Fe-4S] cluster.

The protein belongs to the radical SAM superfamily. MoaA family. In terms of assembly, monomer and homodimer. [4Fe-4S] cluster serves as cofactor.

It carries out the reaction GTP + AH2 + S-adenosyl-L-methionine = (8S)-3',8-cyclo-7,8-dihydroguanosine 5'-triphosphate + 5'-deoxyadenosine + L-methionine + A + H(+). It functions in the pathway cofactor biosynthesis; molybdopterin biosynthesis. In terms of biological role, catalyzes the cyclization of GTP to (8S)-3',8-cyclo-7,8-dihydroguanosine 5'-triphosphate. The chain is GTP 3',8-cyclase 1 (moaA1) from Pseudomonas aeruginosa (strain ATCC 15692 / DSM 22644 / CIP 104116 / JCM 14847 / LMG 12228 / 1C / PRS 101 / PAO1).